We begin with the raw amino-acid sequence, 149 residues long: MTDLAAIKIVRLDKELPLPKRAHRGDAGVDLHATTDAVIAPGHREIVGTGIAIALPLGTVGLVHPRSGLAAREGLSIVNAPGTIDADYRGEIKVCLINLDPEKPIMITRGDRIAQLVIQKVELVDFEEVEELDDTVRGDQGYGSTGKTA.

Substrate contacts are provided by residues 66–68 (RSG), Asn79, 83–85 (TID), and Lys93.

This sequence belongs to the dUTPase family. Requires Mg(2+) as cofactor.

It carries out the reaction dUTP + H2O = dUMP + diphosphate + H(+). It functions in the pathway pyrimidine metabolism; dUMP biosynthesis; dUMP from dCTP (dUTP route): step 2/2. This enzyme is involved in nucleotide metabolism: it produces dUMP, the immediate precursor of thymidine nucleotides and it decreases the intracellular concentration of dUTP so that uracil cannot be incorporated into DNA. The sequence is that of Deoxyuridine 5'-triphosphate nucleotidohydrolase from Corynebacterium glutamicum (strain ATCC 13032 / DSM 20300 / JCM 1318 / BCRC 11384 / CCUG 27702 / LMG 3730 / NBRC 12168 / NCIMB 10025 / NRRL B-2784 / 534).